A 110-amino-acid polypeptide reads, in one-letter code: Minor capsid protein VP2 (110 aa).

Belongs to the vesivirus VP2 protein family. Homooligomer. The portal-like structure consists in 12 copies of VP2. Interacts with capsid protein VP1.

The protein resides in the virion. The protein localises to the host cytoplasm. Minor structural protein that forms a portal-like structure at a unique three-fold axis of symmetry, following binding to the host receptor. The channel formed by VP2 may allow the delivery of the viral genome through the host endosomal membrane. The chain is Minor capsid protein VP2 from Vesicular exanthema of swine virus serotype A48 (isolate Swine/United States/A48/1948) (VESV).